The following is a 507-amino-acid chain: Probable malate:quinone oxidoreductase 2 (507 aa).

Belongs to the MQO family. The cofactor is FAD.

It catalyses the reaction (S)-malate + a quinone = a quinol + oxaloacetate. Its pathway is carbohydrate metabolism; tricarboxylic acid cycle; oxaloacetate from (S)-malate (quinone route): step 1/1. In Pseudomonas aeruginosa (strain ATCC 15692 / DSM 22644 / CIP 104116 / JCM 14847 / LMG 12228 / 1C / PRS 101 / PAO1), this protein is Probable malate:quinone oxidoreductase 2.